We begin with the raw amino-acid sequence, 616 residues long: Protein decapentaplegic (616 aa).

A signal peptide spans 1–23 (MRAWILLLAVLATSQPIVQVAST). Positions 24 to 474 (EDTSISQRFI…DGRHKARSIR (451 aa)) are excised as a propeptide. A disordered region spans residues 80–188 (SDSDSDNNNN…TSTESHQSPI (109 aa)). Positions 86–105 (NNNNNYKNRNNNNNNLNKGP) are enriched in low complexity. The segment covering 106 to 115 (RNNKNKGNKH) has biased composition (basic residues). Residues 116-139 (SKSDANRQFNEVHKPRTDQLENSK) are compositionally biased toward basic and acidic residues. N147 is a glycosylation site (N-linked (GlcNAc...) asparagine). A compositionally biased stretch (polar residues) spans 173-188 (ATTTALTSTESHQSPI). N-linked (GlcNAc...) asparagine glycans are attached at residues N360 and N395. A disordered region spans residues 470 to 512 (ARSIRDVSGGGGGGGGAGEGGKGNGGGRNRRHQRRPARRKNHE). Residues 477 to 496 (SGGGGGGGGAGEGGKGNGGG) show a composition bias toward gly residues. Residues 497 to 509 (RNRRHQRRPARRK) show a composition bias toward basic residues. 3 cysteine pairs are disulfide-bonded: C515–C581, C544–C613, and C548–C615. A glycan (N-linked (GlcNAc...) asparagine) is linked at N557.

Belongs to the TGF-beta family. As to quaternary structure, heterodimers of scw/dpp are the active subunit, dpp/dpp homodimers elicit a basal response and scw/scw homodimers alone are ineffective in specifying a dorsal pattern. As to expression, expressed in the imaginal discs associated with establishment of the proximal-distal axis of the appendages, and midgut mesoderm.

Its subcellular location is the secreted. In terms of biological role, acts as an extracellular morphogen to establish at least two cellular response thresholds within the dorsal half of the drosophila embryo. Required for the proper development of the embryonic dorsal hypoderm, for viability of larvae and for cell viability of the epithelial cells in the imaginal disks. Acts together with scw. The polypeptide is Protein decapentaplegic (dpp) (Drosophila pseudoobscura pseudoobscura (Fruit fly)).